The primary structure comprises 184 residues: ATP synthase subunit b, chloroplastic (184 aa).

A helical membrane pass occupies residues 27–49 (LATNPINLSVVFGVLIFFGKGVL).

It belongs to the ATPase B chain family. F-type ATPases have 2 components, F(1) - the catalytic core - and F(0) - the membrane proton channel. F(1) has five subunits: alpha(3), beta(3), gamma(1), delta(1), epsilon(1). F(0) has four main subunits: a(1), b(1), b'(1) and c(10-14). The alpha and beta chains form an alternating ring which encloses part of the gamma chain. F(1) is attached to F(0) by a central stalk formed by the gamma and epsilon chains, while a peripheral stalk is formed by the delta, b and b' chains.

It localises to the plastid. Its subcellular location is the chloroplast thylakoid membrane. Its function is as follows. F(1)F(0) ATP synthase produces ATP from ADP in the presence of a proton or sodium gradient. F-type ATPases consist of two structural domains, F(1) containing the extramembraneous catalytic core and F(0) containing the membrane proton channel, linked together by a central stalk and a peripheral stalk. During catalysis, ATP synthesis in the catalytic domain of F(1) is coupled via a rotary mechanism of the central stalk subunits to proton translocation. In terms of biological role, component of the F(0) channel, it forms part of the peripheral stalk, linking F(1) to F(0). The protein is ATP synthase subunit b, chloroplastic of Nasturtium officinale (Watercress).